A 297-amino-acid chain; its full sequence is 33 kDa chaperonin (297 aa).

2 disulfides stabilise this stretch: cysteine 239/cysteine 241 and cysteine 272/cysteine 275.

It belongs to the HSP33 family. Under oxidizing conditions two disulfide bonds are formed involving the reactive cysteines. Under reducing conditions zinc is bound to the reactive cysteines and the protein is inactive.

The protein resides in the cytoplasm. In terms of biological role, redox regulated molecular chaperone. Protects both thermally unfolding and oxidatively damaged proteins from irreversible aggregation. Plays an important role in the bacterial defense system toward oxidative stress. The polypeptide is 33 kDa chaperonin (Clostridium acetobutylicum (strain ATCC 824 / DSM 792 / JCM 1419 / IAM 19013 / LMG 5710 / NBRC 13948 / NRRL B-527 / VKM B-1787 / 2291 / W)).